The following is a 550-amino-acid chain: Methionine--tRNA ligase (550 aa).

The 'HIGH' region motif lies at 14–24; that stretch reads PYANGSLHIGH. The Zn(2+) site is built by C145, C148, C158, and C161. Residues 331–335 carry the 'KMSKS' region motif; that stretch reads KMSKS. Residue K334 participates in ATP binding.

The protein belongs to the class-I aminoacyl-tRNA synthetase family. MetG type 1 subfamily. As to quaternary structure, monomer. Zn(2+) serves as cofactor.

It localises to the cytoplasm. The enzyme catalyses tRNA(Met) + L-methionine + ATP = L-methionyl-tRNA(Met) + AMP + diphosphate. In terms of biological role, is required not only for elongation of protein synthesis but also for the initiation of all mRNA translation through initiator tRNA(fMet) aminoacylation. The polypeptide is Methionine--tRNA ligase (Wigglesworthia glossinidia brevipalpis).